The following is a 250-amino-acid chain: 2,5-dichloro-2,5-cyclohexadiene-1,4-diol dehydrogenase LinX (250 aa).

Residues Asp38, Asp64, Val65, Tyr156, Lys160, Thr191, and Thr194 each coordinate NAD(+). Residue Tyr156 is the Proton acceptor of the active site.

This sequence belongs to the short-chain dehydrogenases/reductases (SDR) family.

It carries out the reaction 2,5-dichlorocyclohexa-2,5-dien-1,4-diol + NAD(+) = 2,5-dichlorohydroquinone + NADH + H(+). Catalyzes the degradation of 2,5-dichloro-2,5-cyclohexadiene-1,4-diol (2,5-DDOL) into 2,5-dichlorohydroquinone (2,5-DCHQ) in vitro. LinX appears not to be involved in gamma-hexachlorocyclohexane (gamma-HCH) degradation pathway, in contrast to LinC which has the same enzymatic activity. The protein is 2,5-dichloro-2,5-cyclohexadiene-1,4-diol dehydrogenase LinX of Sphingobium indicum (strain DSM 16412 / CCM 7286 / MTCC 6364 / B90A).